The sequence spans 206 residues: LexA repressor (206 aa).

Positions 28 to 48 form a DNA-binding region, H-T-H motif; that stretch reads VREICAAVGLSSTSTVHGHLT. Catalysis depends on for autocatalytic cleavage activity residues S127 and K165.

It belongs to the peptidase S24 family. As to quaternary structure, homodimer.

It catalyses the reaction Hydrolysis of Ala-|-Gly bond in repressor LexA.. Its function is as follows. Represses a number of genes involved in the response to DNA damage (SOS response), including recA and lexA. In the presence of single-stranded DNA, RecA interacts with LexA causing an autocatalytic cleavage which disrupts the DNA-binding part of LexA, leading to derepression of the SOS regulon and eventually DNA repair. The sequence is that of LexA repressor from Lactobacillus delbrueckii subsp. bulgaricus (strain ATCC 11842 / DSM 20081 / BCRC 10696 / JCM 1002 / NBRC 13953 / NCIMB 11778 / NCTC 12712 / WDCM 00102 / Lb 14).